A 275-amino-acid chain; its full sequence is Esterase AAEL000016 (275 aa).

The segment at 1-21 (MMANETAAKSTKSSPTPAVEP) is disordered. Polar residues predominate over residues 7 to 16 (AAKSTKSSPT). Active-site charge relay system residues include Ser-129, Asp-187, and His-214. The disordered stretch occupies residues 253 to 275 (LVDDSGPAGNGVHDDDDDDDDSD). Positions 266 to 275 (DDDDDDDDSD) are enriched in acidic residues.

It belongs to the LovG family.

The sequence is that of Esterase AAEL000016 from Aedes aegypti (Yellowfever mosquito).